Here is a 52-residue protein sequence, read N- to C-terminus: Troponin C, skeletal muscle (52 aa).

2 consecutive EF-hand domains span residues 2 to 37 (KSEE…SGEH) and 38 to 52 (VTDE…DGDK). 5 residues coordinate Ca(2+): aspartate 15, asparagine 17, aspartate 19, tyrosine 21, and glutamate 26.

It belongs to the troponin C family.

In terms of biological role, troponin is the central regulatory protein of striated muscle contraction. Tn consists of three components: Tn-I which is the inhibitor of actomyosin ATPase, Tn-T which contains the binding site for tropomyosin and Tn-C. The binding of calcium to Tn-C abolishes the inhibitory action of Tn on actin filaments. This is Troponin C, skeletal muscle from Protopterus dolloi (Slender lungfish).